Reading from the N-terminus, the 146-residue chain is Ecotin-like protein 1 (146 aa).

The protein belongs to the protease inhibitor I11 (ecotin) family.

The chain is Ecotin-like protein 1 (ISP1) from Leishmania braziliensis.